The primary structure comprises 713 residues: Polyribonucleotide nucleotidyltransferase (713 aa).

Residues Asp-488 and Asp-494 each contribute to the Mg(2+) site. Residues 555-614 (PQMEIIKVPTDKIRDVIGSGGKVIRGIVDETGAKVNIDDDGTVQISAMDRKSIDAAIKMI) form the KH domain. Residues 624–692 (GEIYEGKVVS…ERGKVRLSMK (69 aa)) form the S1 motif domain.

This sequence belongs to the polyribonucleotide nucleotidyltransferase family. Mg(2+) serves as cofactor.

It is found in the cytoplasm. The enzyme catalyses RNA(n+1) + phosphate = RNA(n) + a ribonucleoside 5'-diphosphate. In terms of biological role, involved in mRNA degradation. Catalyzes the phosphorolysis of single-stranded polyribonucleotides processively in the 3'- to 5'-direction. This Hyphomonas neptunium (strain ATCC 15444) protein is Polyribonucleotide nucleotidyltransferase.